Reading from the N-terminus, the 446-residue chain is Chromosomal replication initiator protein DnaA (446 aa).

Positions M1 to P81 are domain I, interacts with DnaA modulators. Residues P81–S109 form a domain II region. The domain III, AAA+ region stretch occupies residues M110–S326. ATP is bound by residues G154, G156, K157, and T158. The segment at S327–K446 is domain IV, binds dsDNA.

This sequence belongs to the DnaA family. As to quaternary structure, oligomerizes as a right-handed, spiral filament on DNA at oriC.

The protein resides in the cytoplasm. In terms of biological role, plays an essential role in the initiation and regulation of chromosomal replication. ATP-DnaA binds to the origin of replication (oriC) to initiate formation of the DNA replication initiation complex once per cell cycle. Binds the DnaA box (a 9 base pair repeat at the origin) and separates the double-stranded (ds)DNA. Forms a right-handed helical filament on oriC DNA; dsDNA binds to the exterior of the filament while single-stranded (ss)DNA is stabiized in the filament's interior. The ATP-DnaA-oriC complex binds and stabilizes one strand of the AT-rich DNA unwinding element (DUE), permitting loading of DNA polymerase. After initiation quickly degrades to an ADP-DnaA complex that is not apt for DNA replication. Binds acidic phospholipids. The sequence is that of Chromosomal replication initiator protein DnaA from Bacillus cereus (strain B4264).